We begin with the raw amino-acid sequence, 203 residues long: dITP/XTP pyrophosphatase (203 aa).

A substrate-binding site is contributed by 7–12 (TGNRDK). Aspartate 73 (proton acceptor) is an active-site residue. A Mg(2+)-binding site is contributed by aspartate 73. Residues serine 74, 155 to 158 (FGYD), lysine 178, and 183 to 184 (HR) contribute to the substrate site.

Belongs to the HAM1 NTPase family. In terms of assembly, homodimer. It depends on Mg(2+) as a cofactor.

It carries out the reaction XTP + H2O = XMP + diphosphate + H(+). It catalyses the reaction dITP + H2O = dIMP + diphosphate + H(+). The enzyme catalyses ITP + H2O = IMP + diphosphate + H(+). Its function is as follows. Pyrophosphatase that catalyzes the hydrolysis of nucleoside triphosphates to their monophosphate derivatives, with a high preference for the non-canonical purine nucleotides XTP (xanthosine triphosphate), dITP (deoxyinosine triphosphate) and ITP. Seems to function as a house-cleaning enzyme that removes non-canonical purine nucleotides from the nucleotide pool, thus preventing their incorporation into DNA/RNA and avoiding chromosomal lesions. The protein is dITP/XTP pyrophosphatase of Wolinella succinogenes (strain ATCC 29543 / DSM 1740 / CCUG 13145 / JCM 31913 / LMG 7466 / NCTC 11488 / FDC 602W) (Vibrio succinogenes).